Consider the following 125-residue polypeptide: Cystatin-like cysteine protease inhibitor EPIC2B (125 aa).

The first 21 residues, 1 to 21, serve as a signal peptide directing secretion; the sequence is MSFLRPTLALLAVTALVTTSG. Residue N45 is glycosylated (N-linked (GlcNAc...) asparagine). The Secondary area of contact signature appears at 68-72; the sequence is QVVSG.

It belongs to the cystatin family. As to quaternary structure, interacts with the host papain-like cysteine protease PIP1. Interacts with the host papain-like cysteine protease RCR3. Interacts with the host papain-like cysteine protease C14.

The protein localises to the secreted. Secreted effector that interacts with and inhibits the pathogenesis-related papain-like cysteine proteases C14, PIP1 and RCR3 of host plants. Inhibition of host proteases by a pathogen extracellular protease inhibitor forms a specific type of defense-counterdefense mechanism between plants and microbial pathogens. This Phytophthora infestans (Potato late blight agent) protein is Cystatin-like cysteine protease inhibitor EPIC2B.